The chain runs to 155 residues: 6,7-dimethyl-8-ribityllumazine synthase (155 aa).

Residues phenylalanine 23, 57-59 (AFE), and 81-83 (AVI) each bind 5-amino-6-(D-ribitylamino)uracil. Residue 86–87 (ST) coordinates (2S)-2-hydroxy-3-oxobutyl phosphate. Histidine 89 acts as the Proton donor in catalysis. A 5-amino-6-(D-ribitylamino)uracil-binding site is contributed by phenylalanine 114. Residue arginine 128 coordinates (2S)-2-hydroxy-3-oxobutyl phosphate.

It belongs to the DMRL synthase family.

The enzyme catalyses (2S)-2-hydroxy-3-oxobutyl phosphate + 5-amino-6-(D-ribitylamino)uracil = 6,7-dimethyl-8-(1-D-ribityl)lumazine + phosphate + 2 H2O + H(+). It functions in the pathway cofactor biosynthesis; riboflavin biosynthesis; riboflavin from 2-hydroxy-3-oxobutyl phosphate and 5-amino-6-(D-ribitylamino)uracil: step 1/2. Functionally, catalyzes the formation of 6,7-dimethyl-8-ribityllumazine by condensation of 5-amino-6-(D-ribitylamino)uracil with 3,4-dihydroxy-2-butanone 4-phosphate. This is the penultimate step in the biosynthesis of riboflavin. The polypeptide is 6,7-dimethyl-8-ribityllumazine synthase (Dehalococcoides mccartyi (strain ATCC BAA-2100 / JCM 16839 / KCTC 5957 / BAV1)).